We begin with the raw amino-acid sequence, 383 residues long: Sulfate adenylyltransferase (383 aa).

It belongs to the sulfate adenylyltransferase family.

It carries out the reaction sulfate + ATP + H(+) = adenosine 5'-phosphosulfate + diphosphate. The protein operates within sulfur metabolism; hydrogen sulfide biosynthesis; sulfite from sulfate: step 1/3. The protein is Sulfate adenylyltransferase of Halothermothrix orenii (strain H 168 / OCM 544 / DSM 9562).